Reading from the N-terminus, the 90-residue chain is DNA-directed RNA polymerase subunit omega (90 aa).

The disordered stretch occupies residues 69–90 (RQEQQEQDAAELAAVSSITHNR).

Belongs to the RNA polymerase subunit omega family. The RNAP catalytic core consists of 2 alpha, 1 beta, 1 beta' and 1 omega subunit. When a sigma factor is associated with the core the holoenzyme is formed, which can initiate transcription.

The catalysed reaction is RNA(n) + a ribonucleoside 5'-triphosphate = RNA(n+1) + diphosphate. Promotes RNA polymerase assembly. Latches the N- and C-terminal regions of the beta' subunit thereby facilitating its interaction with the beta and alpha subunits. This is DNA-directed RNA polymerase subunit omega from Aliivibrio salmonicida (strain LFI1238) (Vibrio salmonicida (strain LFI1238)).